Reading from the N-terminus, the 557-residue chain is Dihydroxy-acid dehydratase (557 aa).

Mg(2+) is bound at residue Asp-78. Cys-119 lines the [2Fe-2S] cluster pocket. Positions 120 and 121 each coordinate Mg(2+). Residue Lys-121 is modified to N6-carboxylysine. Residue Cys-192 participates in [2Fe-2S] cluster binding. A Mg(2+)-binding site is contributed by Glu-442. The active-site Proton acceptor is Ser-468.

This sequence belongs to the IlvD/Edd family. Homodimer. Requires [2Fe-2S] cluster as cofactor. Mg(2+) is required as a cofactor.

It catalyses the reaction (2R)-2,3-dihydroxy-3-methylbutanoate = 3-methyl-2-oxobutanoate + H2O. The catalysed reaction is (2R,3R)-2,3-dihydroxy-3-methylpentanoate = (S)-3-methyl-2-oxopentanoate + H2O. The protein operates within amino-acid biosynthesis; L-isoleucine biosynthesis; L-isoleucine from 2-oxobutanoate: step 3/4. Its pathway is amino-acid biosynthesis; L-valine biosynthesis; L-valine from pyruvate: step 3/4. Functions in the biosynthesis of branched-chain amino acids. Catalyzes the dehydration of (2R,3R)-2,3-dihydroxy-3-methylpentanoate (2,3-dihydroxy-3-methylvalerate) into 2-oxo-3-methylpentanoate (2-oxo-3-methylvalerate) and of (2R)-2,3-dihydroxy-3-methylbutanoate (2,3-dihydroxyisovalerate) into 2-oxo-3-methylbutanoate (2-oxoisovalerate), the penultimate precursor to L-isoleucine and L-valine, respectively. The sequence is that of Dihydroxy-acid dehydratase from Bacillus cereus (strain AH187).